A 307-amino-acid chain; its full sequence is Trehalose transport system permease protein SugA (307 aa).

6 helical membrane passes run 25-45, 89-109, 123-143, 168-188, 217-237, and 272-292; these read LAFM…AYPI, LAIT…LALV, AVLI…YYAW, LGIV…LLLL, ILPM…LDAF, and LGSA…FIFI. The region spanning 85–291 is the ABC transmembrane type-1 domain; sequence LAVTLAITAV…GCVAVIAFIF (207 aa).

Belongs to the binding-protein-dependent transport system permease family. As to quaternary structure, the complex is composed of two ATP-binding proteins (SugC), two transmembrane proteins (Suga and SugB) and a solute-binding protein (LpqY).

Its subcellular location is the cell inner membrane. In terms of biological role, part of the ABC transporter complex LpqY-SugA-SugB-SugC, which is highly specific for uptake of trehalose. Involved in the recycling of extracellular trehalose released from trehalose-containing molecules synthesized by M.tuberculosis. Trehalose uptake is essential for virulence. Probably responsible for the translocation of the substrate across the membrane. This chain is Trehalose transport system permease protein SugA (sugA), found in Mycobacterium tuberculosis (strain CDC 1551 / Oshkosh).